A 1135-amino-acid polypeptide reads, in one-letter code: Envelopment polyprotein (1135 aa).

An N-terminal signal peptide occupies residues 1-18 (MIMWGLLLTMILIDFGAS). The Lumenal portion of the chain corresponds to 19 to 495 (LRNVYDMKIE…ALLTTFCFGW (477 aa)). 11 disulfide bridges follow: cysteine 29–cysteine 151, cysteine 63–cysteine 157, cysteine 109–cysteine 128, cysteine 133–cysteine 138, cysteine 175–cysteine 185, cysteine 210–cysteine 247, cysteine 234–cysteine 351, cysteine 376–cysteine 435, cysteine 380–cysteine 389, cysteine 405–cysteine 424, and cysteine 452–cysteine 475. Asparagine 134 carries an N-linked (GlcNAc...) asparagine; by host glycan. Residues asparagine 235 and asparagine 347 are each glycosylated (N-linked (GlcNAc...) asparagine; by host). The N-linked (GlcNAc...) asparagine; by host glycan is linked to asparagine 399. Residues 496–516 (ILILSITLAVLVVLKFFAAIL) form a helical membrane-spanning segment. Residues 516-533 (LHNSSQENRFKIILRKIK) form a binding to the ribonucleoprotein region. Residues 517-627 (HNSSQENRFK…LNLFRYKSRC (111 aa)) lie on the Cytoplasmic side of the membrane. CCHC-type zinc fingers lie at residues 545 to 565 (CEVC…NLSC) and 570 to 591 (CPYC…YKVC). Binding to the ribonucleoprotein stretches follow at residues 588–605 (YKVC…KKTI), 592–603 (QATHRFRDDLKK), and 611–625 (SPGC…RYKS). The ITAM domain occupies 611-634 (SPGCYRTLNLFRYKSRCYIFTVWV). Tyrosine 615 and tyrosine 628 each carry phosphotyrosine. Residues 615-618 (YRTL) carry the YxxL motif. The chain crosses the membrane as a helical span at residues 628-648 (YIFTVWVTLLIIESIMWAASA). The Lumenal segment spans residues 649-1105 (SETVLEPSWN…EWITGIFNGN (457 aa)). Disulfide bonds link cysteine 735–cysteine 770, cysteine 739–cysteine 777, cysteine 751–cysteine 885, cysteine 765–cysteine 896, cysteine 780–cysteine 904, cysteine 806–cysteine 815, cysteine 823–cysteine 832, and cysteine 863–cysteine 867. The interval 757 to 777 (FEYENNWGCNPADCPGIGTGC) is fusion loop. Asparagine 928 carries N-linked (GlcNAc...) asparagine; by host glycosylation. 5 disulfides stabilise this stretch: cysteine 970–cysteine 1000, cysteine 993–cysteine 1045, cysteine 1010–cysteine 1015, cysteine 1046–cysteine 1051, and cysteine 1085–cysteine 1089. The helical transmembrane segment at 1106 to 1126 (WIVIVVLVFFFILSLILLSLL) threads the bilayer. A binding to the ribonucleoprotein region spans residues 1122-1135 (LLSLLCPIRKHKRS). The Cytoplasmic segment spans residues 1127–1135 (CPIRKHKRS).

It belongs to the hantavirus envelope glycoprotein family. Homodimer. Homotetramer; forms heterotetrameric Gn-Gc spikes in the pre-fusion conformation. Interacts (via C-terminus) with the nucleoprotein. Interacts with host TUFM; this interaction contributes to the virus-induced degradation of mitochondria by autophagy, which leads to degradation of host MAVS and inhibition of type I interferon (IFN) responses. Interacts with host MAP1LC3B; this interaction contributes to the virus-induced degradation of mitochondria by autophagy, which leads to degradation of host MAVS and inhibition of type I interferon (IFN) responses. In terms of assembly, homodimer. Homotetramer; forms heterotetrameric Gn-Gc spikes in the pre-fusion conformation. Homotrimer; forms homotrimer in the post-fusion conformation at acidic pH. Interacts (via C-terminus) with the nucleoprotein. Envelope polyprotein precursor is quickly cleaved in vivo just after synthesis, presumably by host signal peptidase.

It localises to the virion membrane. It is found in the host cell surface. The protein resides in the host Golgi apparatus membrane. The protein localises to the host endoplasmic reticulum membrane. Its subcellular location is the host mitochondrion. In terms of biological role, forms homotetramers with glycoprotein C at the surface of the virion. Attaches the virion to host cell receptors including integrin ITGAV/ITGB3. This attachment induces virion internalization predominantly through clathrin-dependent endocytosis. Mediates the assembly and budding of infectious virus particles through its interaction with the nucleocapsid protein and the viral genome. May dysregulate normal immune and endothelial cell responses through an ITAM motif. Translocates to mitochondria, binds to host TUFM and recruits MAP1LC3B. These interactions induce mitochondrial autophagy and therefore destruction of host MAVS leading to inhibition of type I interferon (IFN) responses. Concomitant breakdown of glycoprotein N is apparently prevented by the nucleoprotein that may inhibit Gn-stimulated autophagosome-lysosome fusion. Interacts with the viral genomic RNA. Its function is as follows. Forms homotetramers with glycoprotein N at the surface of the virion. Attaches the virion to host cell receptors including integrin ITGAV/ITGB3. This attachment induces virion internalization predominantly through clathrin-dependent endocytosis. Class II fusion protein that promotes fusion of viral membrane with host endosomal membrane after endocytosis of the virion. In Dobrava-Belgrade orthohantavirus (DOBV), this protein is Envelopment polyprotein (GP).